The primary structure comprises 502 residues: Probable cytosol aminopeptidase (502 aa).

Residues K267 and D272 each contribute to the Mn(2+) site. Residue K279 is part of the active site. Positions 290, 349, and 351 each coordinate Mn(2+). Residue R353 is part of the active site.

The protein belongs to the peptidase M17 family. The cofactor is Mn(2+).

Its subcellular location is the cytoplasm. It catalyses the reaction Release of an N-terminal amino acid, Xaa-|-Yaa-, in which Xaa is preferably Leu, but may be other amino acids including Pro although not Arg or Lys, and Yaa may be Pro. Amino acid amides and methyl esters are also readily hydrolyzed, but rates on arylamides are exceedingly low.. It carries out the reaction Release of an N-terminal amino acid, preferentially leucine, but not glutamic or aspartic acids.. Functionally, presumably involved in the processing and regular turnover of intracellular proteins. Catalyzes the removal of unsubstituted N-terminal amino acids from various peptides. This chain is Probable cytosol aminopeptidase, found in Aeromonas salmonicida (strain A449).